A 417-amino-acid chain; its full sequence is Blood group Rh(D) polypeptide (417 aa).

Transmembrane regions (helical) follow at residues 12 to 32 (CLPL…YFFT), 44 to 64 (LVAS…GLGF), 77 to 97 (VAFN…LDGF), 107 to 127 (VITL…LISV), 130 to 150 (VLGK…VTAL), 167 to 187 (MNMM…AWCL), 203 to 223 (TIPS…WPSF), 238 to 258 (VFNT…GSSL), 287 to 307 (LIPS…ISVG), 334 to 354 (LLGL…TVGA), and 358 to 378 (MIGF…VIAL).

It belongs to the ammonium transporter (TC 2.A.49) family. Rh subfamily. Post-translationally, palmitoylated. Restricted to tissues or cell lines expressing erythroid characters.

The protein localises to the cell membrane. In terms of biological role, may be part of an oligomeric complex which is likely to have a transport or channel function in the erythrocyte membrane. The chain is Blood group Rh(D) polypeptide (RHD) from Homo sapiens (Human).